Consider the following 169-residue polypeptide: Der GTPase-activating protein YihI (169 aa).

Disordered regions lie at residues 1 to 83 (MNPL…PTKP) and 150 to 169 (DEEEREEEKQDDIMQLLKGN). Basic and acidic residues predominate over residues 21 to 30 (NREELNAEGR). The span at 31–40 (ARKREKKHRG) shows a compositional bias: basic residues. 2 stretches are compositionally biased toward basic and acidic residues: residues 51–66 (SGDKHPSGKQQRDPRL) and 150–161 (DEEEREEEKQDD).

Belongs to the YihI family. Interacts with Der.

In terms of biological role, a GTPase-activating protein (GAP) that modifies Der/EngA GTPase function. May play a role in ribosome biogenesis. The protein is Der GTPase-activating protein YihI of Photorhabdus laumondii subsp. laumondii (strain DSM 15139 / CIP 105565 / TT01) (Photorhabdus luminescens subsp. laumondii).